The sequence spans 489 residues: Glutamyl-tRNA(Gln) amidotransferase subunit A (489 aa).

Active-site charge relay system residues include K80 and S160. S184 acts as the Acyl-ester intermediate in catalysis.

It belongs to the amidase family. GatA subfamily. In terms of assembly, heterotrimer of A, B and C subunits.

It catalyses the reaction L-glutamyl-tRNA(Gln) + L-glutamine + ATP + H2O = L-glutaminyl-tRNA(Gln) + L-glutamate + ADP + phosphate + H(+). In terms of biological role, allows the formation of correctly charged Gln-tRNA(Gln) through the transamidation of misacylated Glu-tRNA(Gln) in organisms which lack glutaminyl-tRNA synthetase. The reaction takes place in the presence of glutamine and ATP through an activated gamma-phospho-Glu-tRNA(Gln). The chain is Glutamyl-tRNA(Gln) amidotransferase subunit A from Wolbachia sp. subsp. Drosophila simulans (strain wRi).